The chain runs to 541 residues: DEAD-box ATP-dependent RNA helicase 57 (541 aa).

Positions 43–52 (VEEEEDTEQP) are enriched in acidic residues. The segment at 43–72 (VEEEEDTEQPEAEKVIVSSKKRKRRSSNSV) is disordered. A Q motif motif is present at residues 141 to 169 (ELSSRYGCEGYILRNLAELGFKEPTPIQR). Residues 172-342 (IPILLSGREC…RSIMHDAVRV (171 aa)) form the Helicase ATP-binding domain. Position 185-192 (185-192 (APTGSGKT)) interacts with ATP. The DEAD box signature appears at 289-292 (DESD). In terms of domain architecture, Helicase C-terminal spans 370–514 (ALRQSFAESL…EVPSWIMSLK (145 aa)). The interval 517 to 541 (KWRKHRPRRDSISTKPKADKNDTDE) is disordered. The span at 525 to 541 (RDSISTKPKADKNDTDE) shows a compositional bias: basic and acidic residues.

This sequence belongs to the DEAD box helicase family. DDX52/ROK1 subfamily.

The enzyme catalyses ATP + H2O = ADP + phosphate + H(+). The sequence is that of DEAD-box ATP-dependent RNA helicase 57 (RH57) from Arabidopsis thaliana (Mouse-ear cress).